The sequence spans 422 residues: Glycine amidinotransferase, mitochondrial (422 aa).

The transit peptide at 1–37 (MLRVRCLRGGSRGAEAVHYIGSMLRKSFVGWVQRSFQ) directs the protein to the mitochondrion. Catalysis depends on residues Asp253 and His302. Cys406 acts as the Amidino-cysteine intermediate in catalysis.

It belongs to the amidinotransferase family. Homodimer. In terms of tissue distribution, ubiquitously expressed in adult tissues, with highest levels in muscle and intermediate levels in eye, heart, liver, stomach and testis. In stage 28 embryos, expression is higher in the dorsal and ventral parts of the trunk than in the head. In middle gastrulae, expression is highest around the yolk plug, while in stage 15 and tailbud stage embryos, expression is largely restricted to the region around the presumptive notochord and gut.

Its subcellular location is the mitochondrion inner membrane. The catalysed reaction is L-arginine + glycine = guanidinoacetate + L-ornithine. Its pathway is amine and polyamine biosynthesis; creatine biosynthesis; creatine from L-arginine and glycine: step 1/2. In terms of biological role, catalyzes the biosynthesis of guanidinoacetate, the immediate precursor of creatine. Creatine plays a vital role in energy metabolism in muscle tissues. May play a role in embryonic and central nervous system development. This Xenopus laevis (African clawed frog) protein is Glycine amidinotransferase, mitochondrial.